Consider the following 67-residue polypeptide: MTYSFFVDMTCGGCSKAVNAILSKIDGVSNIQIDLENKKVSCESSKMGADELLKNIQKTGKKCSIIA.

Residues 1–64 (MTYSFFVDMT…NIQKTGKKCS (64 aa)) enclose the HMA domain. 2 residues coordinate Cu cation: C11 and C14.

The protein belongs to the ATX1 family.

Functionally, could bind and deliver cytosolic copper to the copper ATPase proteins. May be important in cellular antioxidant defense. This Dictyostelium discoideum (Social amoeba) protein is Copper transport protein ATOX1 homolog (atox1).